A 313-amino-acid polypeptide reads, in one-letter code: Type II methyltransferase M.NlaX (313 aa).

The SAM-dependent MTase C5-type domain occupies 2–308 (FKIIDLFAGI…EQMKAALSAV (307 aa)). Cys74 is an active-site residue.

Belongs to the class I-like SAM-binding methyltransferase superfamily. C5-methyltransferase family.

The catalysed reaction is a 2'-deoxycytidine in DNA + S-adenosyl-L-methionine = a 5-methyl-2'-deoxycytidine in DNA + S-adenosyl-L-homocysteine + H(+). In terms of biological role, a methylase, recognizes the double-stranded sequence 5'-CCNGG-3' and methylates C-2 on both strands. May be the equivalent of dcm in this bacteria, or it may protect the DNA from cleavage by the putative NlaXP endonuclease. This chain is Type II methyltransferase M.NlaX (nlaXM), found in Neisseria lactamica.